The sequence spans 76 residues: Large ribosomal subunit protein bL28 (76 aa).

Belongs to the bacterial ribosomal protein bL28 family.

The protein is Large ribosomal subunit protein bL28 of Opitutus terrae (strain DSM 11246 / JCM 15787 / PB90-1).